The sequence spans 259 residues: Ribosomal RNA small subunit methyltransferase A (259 aa).

Residues asparagine 13, leucine 15, glycine 40, glutamate 61, aspartate 85, and asparagine 103 each contribute to the S-adenosyl-L-methionine site.

It belongs to the class I-like SAM-binding methyltransferase superfamily. rRNA adenine N(6)-methyltransferase family. RsmA subfamily.

Its subcellular location is the cytoplasm. It catalyses the reaction adenosine(1518)/adenosine(1519) in 16S rRNA + 4 S-adenosyl-L-methionine = N(6)-dimethyladenosine(1518)/N(6)-dimethyladenosine(1519) in 16S rRNA + 4 S-adenosyl-L-homocysteine + 4 H(+). Its function is as follows. Specifically dimethylates two adjacent adenosines (A1518 and A1519) in the loop of a conserved hairpin near the 3'-end of 16S rRNA in the 30S particle. May play a critical role in biogenesis of 30S subunits. The protein is Ribosomal RNA small subunit methyltransferase A of Neisseria meningitidis serogroup C / serotype 2a (strain ATCC 700532 / DSM 15464 / FAM18).